A 105-amino-acid chain; its full sequence is U1-sicaritoxin-Li1b (105 aa).

The N-terminal stretch at 1 to 19 (MKLLFEGLLVLVLIAFVVA) is a signal peptide. Positions 20-36 (EFESDAEKWEALITQER) are excised as a propeptide. Disulfide bonds link cysteine 38–cysteine 55, cysteine 46–cysteine 60, cysteine 54–cysteine 73, and cysteine 62–cysteine 71. At arginine 82 the chain carries Arginine amide. Residues 86–105 (ALMVDPETHRMLSLHRLSEE) constitute a propeptide that is removed on maturation.

The protein belongs to the neurotoxin 28 (Litx) family. In terms of tissue distribution, expressed by the venom gland.

The protein resides in the secreted. In terms of biological role, toxin active against insects (S.frugiperda larvae). May act on sodium (Nav) or calcium (Cav) channels. This chain is U1-sicaritoxin-Li1b, found in Loxosceles intermedia (Brown spider).